The sequence spans 940 residues: Phosphoenolpyruvate carboxylase (940 aa).

Catalysis depends on residues histidine 138 and lysine 603.

It belongs to the PEPCase type 1 family. Mg(2+) is required as a cofactor.

It carries out the reaction oxaloacetate + phosphate = phosphoenolpyruvate + hydrogencarbonate. Functionally, forms oxaloacetate, a four-carbon dicarboxylic acid source for the tricarboxylic acid cycle. This chain is Phosphoenolpyruvate carboxylase, found in Streptococcus thermophilus (strain CNRZ 1066).